The sequence spans 327 residues: Dolichyl-phosphate beta-glucosyltransferase (327 aa).

The Lumenal portion of the chain corresponds to 1–15 (MIDLFINIASFTIYG). The helical transmembrane segment at 16–36 (IPVIPLFIIVFVILSYYLLLL) threads the bilayer. At 37–327 (HDESPLWLEK…YLLGIWKIKS (291 aa)) the chain is on the cytoplasmic side.

It belongs to the glycosyltransferase 2 family.

It is found in the endoplasmic reticulum membrane. The enzyme catalyses a di-trans,poly-cis-dolichyl phosphate + UDP-alpha-D-glucose = a di-trans,poly-cis-dolichyl beta-D-glucosyl phosphate + UDP. The protein operates within protein modification; protein glycosylation. In terms of biological role, endoplasmic reticulum membrane-bound UDP-glucose:dolichyl-phosphate glucosyltransferase involved in protein N-linked glycosylation. In Dictyostelium discoideum (Social amoeba), this protein is Dolichyl-phosphate beta-glucosyltransferase (alg5).